Consider the following 138-residue polypeptide: MLSPKKVKYRKKQRGRLSGEAQKGNKISFGEYGLVSLETSFITARQIEAARIAMTRKIKRGGRVWIRIFPDIPYTKKPAETRMGKGKGGVDHWNAPVKLGTVMFEMAGVIEELAQEAMSLASSKLPVKTMFVVRRDLR.

Positions 1-15 (MLSPKKVKYRKKQRG) are enriched in basic residues. Residues 1-21 (MLSPKKVKYRKKQRGRLSGEA) are disordered.

This sequence belongs to the universal ribosomal protein uL16 family. As to quaternary structure, part of the 50S ribosomal subunit.

In terms of biological role, binds 23S rRNA and is also seen to make contacts with the A and possibly P site tRNAs. The protein is Large ribosomal subunit protein uL16 of Borrelia garinii subsp. bavariensis (strain ATCC BAA-2496 / DSM 23469 / PBi) (Borreliella bavariensis).